A 512-amino-acid polypeptide reads, in one-letter code: Podocan-like protein 1 (512 aa).

The N-terminal stretch at 1-26 (MAESGLAMWPSLLLLLLLPGPPPVAG) is a signal peptide. The LRRNT domain maps to 37 to 74 (ESLQPLPRACPLRCSCPRVDTVDCDGLDLRVFPDNITR). N-linked (GlcNAc...) asparagine glycosylation is present at Asn71. LRR repeat units lie at residues 75 to 96 (AAQH…ELSR), 99 to 119 (GLRT…PDEA), 125 to 146 (QLQH…LPRS), 147 to 167 (LRVA…TFGE), 170 to 193 (ALRS…AFRG), 196 to 216 (AIAT…SLPP), 217 to 238 (SLER…ALSR), 241 to 261 (QLRE…DATT), 267 to 288 (SLEY…LPRT), 289 to 309 (LAIL…RLHG), 312 to 332 (GLRY…PAGA), 338 to 359 (GLHT…LPRR), 360 to 380 (LRAL…DLVA), 383 to 396 (GLTE…RLAS), 409 to 430 (ALRS…LPTG), 431 to 451 (LRTL…PLAG), and 454 to 474 (QLRE…GPGT).

It belongs to the small leucine-rich proteoglycan (SLRP) family. SLRP class V subfamily. Post-translationally, N-glycosylated.

It localises to the secreted. The protein resides in the extracellular space. It is found in the extracellular matrix. The sequence is that of Podocan-like protein 1 (PODNL1) from Homo sapiens (Human).